The sequence spans 108 residues: Mitochondrial pyruvate carrier 3 (108 aa).

3 helical membrane-spanning segments follow: residues 19–35 (IHFWAPTFKWGISIANI), 51–67 (IVITGTGLVWSRYSTVI), and 74–90 (LFSVSLGMAVTGIYQLT).

The protein belongs to the mitochondrial pyruvate carrier (MPC) (TC 2.A.105) family. As to expression, abundant in leaf and particularly in the guard cells.

The protein resides in the mitochondrion. Its subcellular location is the mitochondrion inner membrane. In terms of biological role, mediates the uptake of pyruvate into mitochondria. Negatively regulates ABA-induced guard cell signaling and mediates drought stress responses. The chain is Mitochondrial pyruvate carrier 3 from Arabidopsis thaliana (Mouse-ear cress).